The sequence spans 323 residues: Cyclin-H (323 aa).

Ser-5 carries the post-translational modification Phosphoserine; by CDK8. The residue at position 132 (Ser-132) is a Phosphoserine. A disordered region spans residues Tyr-297 to Leu-323. Basic and acidic residues predominate over residues Tyr-302–Glu-311. Ser-304 carries the post-translational modification Phosphoserine; by CDK8. Residues Glu-312–Leu-323 are compositionally biased toward acidic residues. Residue Thr-315 is modified to Phosphothreonine. Ser-322 is modified (phosphoserine).

The protein belongs to the cyclin family. Cyclin C subfamily. Associates primarily with CDK7 and MAT1 to form the CAK complex. CAK can further associate with the core-TFIIH to form the TFIIH basal transcription factor.

The protein resides in the nucleus. Functionally, regulates CDK7, the catalytic subunit of the CDK-activating kinase (CAK) enzymatic complex. CAK activates the cyclin-associated kinases CDK1, CDK2, CDK4 and CDK6 by threonine phosphorylation. CAK complexed to the core-TFIIH basal transcription factor activates RNA polymerase II by serine phosphorylation of the repetitive C-terminal domain (CTD) of its large subunit (POLR2A), allowing its escape from the promoter and elongation of the transcripts. Involved in cell cycle control and in RNA transcription by RNA polymerase II. Its expression and activity are constant throughout the cell cycle. The protein is Cyclin-H (CCNH) of Homo sapiens (Human).